Here is a 461-residue protein sequence, read N- to C-terminus: Chromosomal replication initiator protein DnaA (461 aa).

Residues 1–83 form a domain I, interacts with DnaA modulators region; the sequence is MTASLWQQCL…LHFAVGRRPT (83 aa). The segment at 83–124 is domain II; sequence TAATVQMNTAAAPVADVRIGPAITVPSWTSKQDAMPEINHKS. Residues 125–341 form a domain III, AAA+ region region; sequence NINETYTFEN…GALNRVIANA (217 aa). ATP contacts are provided by Gly-169, Gly-171, Lys-172, and Thr-173. A domain IV, binds dsDNA region spans residues 342 to 461; it reads RFTGKPINID…YSNLIRTLSS (120 aa).

This sequence belongs to the DnaA family. Oligomerizes as a right-handed, spiral filament on DNA at oriC.

It is found in the cytoplasm. In terms of biological role, plays an essential role in the initiation and regulation of chromosomal replication. ATP-DnaA binds to the origin of replication (oriC) to initiate formation of the DNA replication initiation complex once per cell cycle. Binds the DnaA box (a 9 base pair repeat at the origin) and separates the double-stranded (ds)DNA. Forms a right-handed helical filament on oriC DNA; dsDNA binds to the exterior of the filament while single-stranded (ss)DNA is stabiized in the filament's interior. The ATP-DnaA-oriC complex binds and stabilizes one strand of the AT-rich DNA unwinding element (DUE), permitting loading of DNA polymerase. After initiation quickly degrades to an ADP-DnaA complex that is not apt for DNA replication. Binds acidic phospholipids. The sequence is that of Chromosomal replication initiator protein DnaA from Tolumonas auensis (strain DSM 9187 / NBRC 110442 / TA 4).